The chain runs to 315 residues: Thioredoxin reductase (315 aa).

Position 34–41 (34–41 (EGMKVGGQ)) interacts with FAD. A disulfide bond links C134 and C137. 282–291 (DIRVKSLRQV) serves as a coordination point for FAD.

The protein belongs to the class-II pyridine nucleotide-disulfide oxidoreductase family. As to quaternary structure, homodimer. FAD is required as a cofactor.

The protein localises to the cytoplasm. It carries out the reaction [thioredoxin]-dithiol + NADP(+) = [thioredoxin]-disulfide + NADPH + H(+). This is Thioredoxin reductase (trxB) from Peptoclostridium litorale (Clostridium litorale).